The primary structure comprises 93 residues: Small ribosomal subunit protein uS19 (93 aa).

It belongs to the universal ribosomal protein uS19 family.

Functionally, protein S19 forms a complex with S13 that binds strongly to the 16S ribosomal RNA. The sequence is that of Small ribosomal subunit protein uS19 from Pediococcus pentosaceus (strain ATCC 25745 / CCUG 21536 / LMG 10740 / 183-1w).